Here is a 180-residue protein sequence, read N- to C-terminus: uncharacterized protein (180 aa).

The N-terminal stretch at 1 to 21 is a signal peptide; the sequence is MKQCIAFMAILALSLSAISEA. The segment at 23–81 is disordered; the sequence is GGRGVRSSGYSRPVATKPAPAPKQTQTQQQSQQPDATFGQQNMQNTATNTPNNPNNRLA. Residues 27–78 are compositionally biased toward low complexity; that stretch reads VRSSGYSRPVATKPAPAPKQTQTQQQSQQPDATFGQQNMQNTATNTPNNPNN.

This is an uncharacterized protein from Pasteurella multocida (strain Pm70).